The chain runs to 354 residues: Uroporphyrinogen decarboxylase (354 aa).

Residues 27–31 (RQAGR), D77, Y154, S209, and H327 each bind substrate.

The protein belongs to the uroporphyrinogen decarboxylase family. Homodimer.

Its subcellular location is the cytoplasm. The catalysed reaction is uroporphyrinogen III + 4 H(+) = coproporphyrinogen III + 4 CO2. It functions in the pathway porphyrin-containing compound metabolism; protoporphyrin-IX biosynthesis; coproporphyrinogen-III from 5-aminolevulinate: step 4/4. Functionally, catalyzes the decarboxylation of four acetate groups of uroporphyrinogen-III to yield coproporphyrinogen-III. The chain is Uroporphyrinogen decarboxylase from Shewanella putrefaciens (strain CN-32 / ATCC BAA-453).